Consider the following 254-residue polypeptide: UPF0246 protein CPE2152 (254 aa).

Belongs to the UPF0246 family.

In Clostridium perfringens (strain 13 / Type A), this protein is UPF0246 protein CPE2152.